The chain runs to 212 residues: Leucyl/phenylalanyl-tRNA--protein transferase (212 aa).

The protein belongs to the L/F-transferase family.

It is found in the cytoplasm. It catalyses the reaction N-terminal L-lysyl-[protein] + L-leucyl-tRNA(Leu) = N-terminal L-leucyl-L-lysyl-[protein] + tRNA(Leu) + H(+). The enzyme catalyses N-terminal L-arginyl-[protein] + L-leucyl-tRNA(Leu) = N-terminal L-leucyl-L-arginyl-[protein] + tRNA(Leu) + H(+). The catalysed reaction is L-phenylalanyl-tRNA(Phe) + an N-terminal L-alpha-aminoacyl-[protein] = an N-terminal L-phenylalanyl-L-alpha-aminoacyl-[protein] + tRNA(Phe). Its function is as follows. Functions in the N-end rule pathway of protein degradation where it conjugates Leu, Phe and, less efficiently, Met from aminoacyl-tRNAs to the N-termini of proteins containing an N-terminal arginine or lysine. The chain is Leucyl/phenylalanyl-tRNA--protein transferase from Flavobacterium johnsoniae (strain ATCC 17061 / DSM 2064 / JCM 8514 / BCRC 14874 / CCUG 350202 / NBRC 14942 / NCIMB 11054 / UW101) (Cytophaga johnsonae).